The chain runs to 459 residues: ATP synthase subunit beta (459 aa).

148–155 is an ATP binding site; it reads GGAGVGKT.

The protein belongs to the ATPase alpha/beta chains family. In terms of assembly, F-type ATPases have 2 components, CF(1) - the catalytic core - and CF(0) - the membrane proton channel. CF(1) has five subunits: alpha(3), beta(3), gamma(1), delta(1), epsilon(1). CF(0) has three main subunits: a(1), b(2) and c(9-12). The alpha and beta chains form an alternating ring which encloses part of the gamma chain. CF(1) is attached to CF(0) by a central stalk formed by the gamma and epsilon chains, while a peripheral stalk is formed by the delta and b chains.

It is found in the cell inner membrane. The catalysed reaction is ATP + H2O + 4 H(+)(in) = ADP + phosphate + 5 H(+)(out). Its function is as follows. Produces ATP from ADP in the presence of a proton gradient across the membrane. The catalytic sites are hosted primarily by the beta subunits. The sequence is that of ATP synthase subunit beta from Thioalkalivibrio sulfidiphilus (strain HL-EbGR7).